A 114-amino-acid chain; its full sequence is Histone H2B (114 aa).

The interval M1–K22 is disordered. At K3 the chain carries N6-acetyllysine. K110 is covalently cross-linked (Glycyl lysine isopeptide (Lys-Gly) (interchain with G-Cter in ubiquitin)).

This sequence belongs to the histone H2B family. In terms of assembly, the nucleosome is a histone octamer containing two molecules each of H2A, H2B, H3 and H4 assembled in one H3-H4 heterotetramer and two H2A-H2B heterodimers. The octamer wraps approximately 147 bp of DNA. Monoubiquitination of Lys-110 gives a specific tag for epigenetic transcriptional activation and is also prerequisite for histone H3 'Lys-4' and 'Lys-79' methylation.

It is found in the nucleus. The protein resides in the chromosome. Its function is as follows. Core component of nucleosome. Nucleosomes wrap and compact DNA into chromatin, limiting DNA accessibility to the cellular machineries which require DNA as a template. Histones thereby play a central role in transcription regulation, DNA repair, DNA replication and chromosomal stability. DNA accessibility is regulated via a complex set of post-translational modifications of histones, also called histone code, and nucleosome remodeling. The protein is Histone H2B of Olisthodiscus luteus (Marine phytoflagellate).